The following is a 33-amino-acid chain: GLWSTIKQKGKEAAIAAAKAAGKAALNAASEAL.

Leu33 is subject to Leucine amide.

As to expression, expressed by the skin glands.

The protein resides in the secreted. Functionally, has antiparasitic activity against trypomastigote form of T.cruzi (IC(50)=0.25 uM) in vitro but not against L.infantum. Probably acts by permeabilizing cell membranes. In vitro, shows no cytotoxicity against macrophages. Has antibacterial activity. In Pithecopus nordestinus (Northeastern Brazilian leaf frog), this protein is Dermaseptin-4.